Reading from the N-terminus, the 340-residue chain is tRNA-specific 2-thiouridylase MnmA (340 aa).

ATP-binding positions include Ala-6–Ser-13 and Met-32. The active-site Nucleophile is Cys-92. The cysteines at positions 92 and 186 are disulfide-linked. Gly-116 lines the ATP pocket. Positions Lys-134–Gln-136 are interaction with tRNA. The active-site Cysteine persulfide intermediate is Cys-186. Residues Arg-288–Tyr-289 are interaction with tRNA.

This sequence belongs to the MnmA/TRMU family.

Its subcellular location is the cytoplasm. The enzyme catalyses S-sulfanyl-L-cysteinyl-[protein] + uridine(34) in tRNA + AH2 + ATP = 2-thiouridine(34) in tRNA + L-cysteinyl-[protein] + A + AMP + diphosphate + H(+). Its function is as follows. Catalyzes the 2-thiolation of uridine at the wobble position (U34) of tRNA, leading to the formation of s(2)U34. This chain is tRNA-specific 2-thiouridylase MnmA, found in Campylobacter concisus (strain 13826).